Here is a 1224-residue protein sequence, read N- to C-terminus: Probable serine/threonine-protein kinase DDB_G0292350 (1224 aa).

Disordered regions lie at residues 57–98 (MSGS…STQR) and 252–284 (SSPS…DISN). Low complexity-rich tracts occupy residues 58-74 (SGSI…FTSS) and 83-95 (SSSN…SDNS). Coiled-coil stretches lie at residues 352–381 (LFKQ…KQNN) and 540–569 (DVQL…EYLT). Disordered regions lie at residues 693–784 (QPIP…FVIT) and 815–836 (FTNN…TNNI). Positions 743 to 768 (NNNNNNNNNINNNNINNNNINNNKNG) are enriched in low complexity. A compositionally biased stretch (polar residues) spans 772 to 784 (GETPSPSSSFVIT). A Protein kinase domain is found at 935 to 1193 (FRDKIKLGTG…PEMLLHHTFL (259 aa)). Residues 941-949 (LGTGAFGNV) and Lys964 each bind ATP. Asp1063 serves as the catalytic Proton acceptor.

This sequence belongs to the protein kinase superfamily. Ser/Thr protein kinase family. Requires Mg(2+) as cofactor.

It catalyses the reaction L-seryl-[protein] + ATP = O-phospho-L-seryl-[protein] + ADP + H(+). The enzyme catalyses L-threonyl-[protein] + ATP = O-phospho-L-threonyl-[protein] + ADP + H(+). In Dictyostelium discoideum (Social amoeba), this protein is Probable serine/threonine-protein kinase DDB_G0292350.